The sequence spans 550 residues: Glypican-1 (550 aa).

An N-terminal signal peptide occupies residues 1-20; that stretch reads MRFFPWGFWLLCVASAPARG. 7 disulfides stabilise this stretch: cysteine 29–cysteine 65, cysteine 59–cysteine 253, cysteine 66–cysteine 256, cysteine 188–cysteine 340, cysteine 243–cysteine 276, cysteine 265–cysteine 412, and cysteine 269–cysteine 398. 2 N-linked (GlcNAc...) asparagine glycosylation sites follow: asparagine 76 and asparagine 113. N-linked (GlcNAc...) asparagine glycosylation occurs at asparagine 382. 2 disordered regions span residues 475–494 and 502–522; these read FQDA…CPDD and KSPS…GHGV. Positions 481–494 are enriched in low complexity; sequence DMSGSGSGDSCPDD. 3 O-linked (Xyl...) (heparan sulfate) serine glycosylation sites follow: serine 483, serine 485, and serine 487. Glycine 524 is lipidated: GPI-anchor amidated glycine. Positions 525-550 are cleaved as a propeptide — removed in mature form; it reads ASSRSLPSAFLLFLSGASIVVQHLWR.

This sequence belongs to the glypican family. In terms of processing, O-glycosylated with heparan sulfate.

The protein resides in the cell membrane. Its subcellular location is the endosome. It is found in the secreted. The protein localises to the extracellular space. Functionally, cell surface proteoglycan that bears heparan sulfate. Modulates Wnt-signaling pathway. The protein is Glypican-1 (GPC1) of Gallus gallus (Chicken).